The chain runs to 341 residues: HTH-type transcriptional repressor PurR (341 aa).

Residues 2–56 enclose the HTH lacI-type domain; the sequence is ATIKDVAKRANVSTTTVSHVINKTRFVAEETRNAVWAAIKELHYSPSAVARSLKV. Residues 4-23 constitute a DNA-binding region (H-T-H motif); sequence IKDVAKRANVSTTTVSHVIN. A DNA-binding region spans residues 48–56; it reads SAVARSLKV. Residues tyrosine 73, arginine 190, threonine 192, phenylalanine 221, and aspartate 275 each contribute to the hypoxanthine site.

Homodimer.

It functions in the pathway purine metabolism; purine nucleotide biosynthesis [regulation]. Its function is as follows. Is the main repressor of the genes involved in the de novo synthesis of purine nucleotides, regulating purB, purC, purEK, purF, purHD, purL, purMN and guaBA expression. PurR is allosterically activated to bind its cognate DNA by binding the purine corepressors, hypoxanthine or guanine, thereby effecting transcription repression. The polypeptide is HTH-type transcriptional repressor PurR (Shigella sonnei (strain Ss046)).